A 101-amino-acid polypeptide reads, in one-letter code: Small ribosomal subunit protein uS10 (101 aa).

It belongs to the universal ribosomal protein uS10 family. As to quaternary structure, part of the 30S ribosomal subunit.

Involved in the binding of tRNA to the ribosomes. The chain is Small ribosomal subunit protein uS10 from Cytophaga hutchinsonii (strain ATCC 33406 / DSM 1761 / CIP 103989 / NBRC 15051 / NCIMB 9469 / D465).